The chain runs to 557 residues: Beta-amylase 2, chloroplastic (557 aa).

The transit peptide at 1–38 directs the protein to the chloroplast; it reads MMSLNLAHQTGAAAAVAPAAPRTAVVAAAAGTVSAPAV. Substrate-binding residues include D135, H175, and D183. The active-site Proton donor is E267. Positions 380, 385, and 427 each coordinate substrate. E465 functions as the Proton acceptor in the catalytic mechanism. Residues 466 to 467 and R499 contribute to the substrate site; that span reads NA.

This sequence belongs to the glycosyl hydrolase 14 family.

It localises to the plastid. The protein resides in the chloroplast. It catalyses the reaction Hydrolysis of (1-&gt;4)-alpha-D-glucosidic linkages in polysaccharides so as to remove successive maltose units from the non-reducing ends of the chains.. Its function is as follows. Possesses beta-amylase activity in vitro. May be involved in cold resistance by mediating the accumulation of maltose upon freezing stress, thus contributing to the protection of membranes. The chain is Beta-amylase 2, chloroplastic from Oryza sativa subsp. japonica (Rice).